A 246-amino-acid polypeptide reads, in one-letter code: Acetoacetate decarboxylase (246 aa).

Catalysis depends on Lys-116, which acts as the Schiff-base intermediate with acetoacetate.

It belongs to the ADC family.

The catalysed reaction is acetoacetate + H(+) = acetone + CO2. Its function is as follows. Catalyzes the conversion of acetoacetate to acetone and carbon dioxide. This is Acetoacetate decarboxylase from Burkholderia multivorans (strain ATCC 17616 / 249).